A 1269-amino-acid polypeptide reads, in one-letter code: MHIFKNLTEPTAVTHSLSCNFTGERNLVLVKGSQLLQIFRYKDDIPTKDEAPRLELITEYYLDGTVTGVTRIKTIDNYDLDSLYISVKHAKAVIVAWNASSFTIDTKSLHYYEKGLVESNFFEPECSSVAVSDEANSFYTCLLFQNDRMAFLPIIEKGLDDDEMPESGQVFDPSFIVKASRLDKRIENVMDICFLHEYRETTMGILFQPKRAWVGMKNILKDTVSYAIVSVDVHQKNSTVIGTLNGLPVDAQKVIPLPAPLGGSLIICANTILYIDSSASYTGVMVNNTHRQNSDLIVSRDQSTLDLRLEGAEVCFIQELGNTALLVTEDGQFFSLLFNKDGRRVASLELRPIEPDNFILSQPSSVAAGPDGTIFLGSRAGDSLLVKWYHGEPESQPEETLDDGNESDDDLYGGDTAQTEDTTNRPLKLRLADRMLGMGPMQSLALGKNRGSQGVEFVTTTGVGANSALAILTSALMPYKRKSLYKDMPGGQFWSVPVRFEEEGEVAKSRTYVVSSDSENSYLYYVDAAGVIEDVSLSTKKKKTKKHFVSNVTTIFSSSMLDSALLQVCLETVNIYDAKIGQPHKYSLPQGTTAVEARVLGNYVLVLLSDGQVKILEAVSINKRPFLKAAQVSIEPASESKAIGIYATDSSLTFGAPSKKRTRQGSPAQDSRPVVVVCYADGSLLLQGLNSDDRLILDASDLSGFIKEKDGQLYDAPLELVDIALSPLGDDHILRDYLVLLTPQQLVVYEPYHYNDKLRFRKIFLERTPTINSDRRLTQVPLINGKHTLGVTGETAYILVKTLHTSPRLIEFGETKGAVAFTSWDGKFAYLTQAGEVAECRFDPSFSLETNWPVKHVQLCGETISKVTYHETMDVYVIATHKTVPHVVRDEDDEVIESLTPDIMPATTYQGAIRIVNPYSWTVIDSYEFEMPAEAALCCESVKLSISDRKSQKREVVAVGTSILRGEDLAARGALYLFDVIEIVPEKERPETNRRLKKLVQDRVRGAFTAVCEVSGRLLAVQGQKLLVQALQDDLTLVPVAFLDMQTYVAVAKSLNSMLLLGDATRSVQFVGFSMDPYQMIPFARDLQRVLVTTCDFAIEGENLTFVVADLQKRLHILEYDPDDPQSYSGARLLRRSVFYSGKVIDSSAMVPINEDRFMVIGVCSDGSVTDVVPCPEDAYRRLYAIQTQITDKEAHVCGLHPRAYRYDPILPGTGNSPHRPILDGHTLIRFANLPRNKQNVYANRLGQRYQQLIWKDLELISDLFKKCI.

The disordered stretch occupies residues 393 to 427 (PESQPEETLDDGNESDDDLYGGDTAQTEDTTNRPL). Positions 395 to 412 (SQPEETLDDGNESDDDLY) are enriched in acidic residues. Over residues 416–425 (TAQTEDTTNR) the composition is skewed to polar residues.

This sequence belongs to the CFT1 family.

Its subcellular location is the nucleus. In terms of biological role, RNA-binding component of the cleavage and polyadenylation factor (CPF) complex, which plays a key role in polyadenylation-dependent pre-mRNA 3'-end formation and cooperates with cleavage factors including the CFIA complex and NAB4/CFIB. Involved in poly(A) site recognition. May be involved in coupling transcription termination and mRNA 3'-end formation. This is Protein CFT1 (CFT1) from Yarrowia lipolytica (strain CLIB 122 / E 150) (Yeast).